The primary structure comprises 246 residues: Major prion protein (246 aa).

An N-terminal signal peptide occupies residues 1–15 (MLVLFVATWSDLGLC). The segment at 16–223 (KKRPKPGGWN…ESQAYYQRGS (208 aa)) is interaction with GRB2, ERI3 and SYN1. A disordered region spans residues 18–102 (RPKPGGWNTG…HKPSKPKTSM (85 aa)). 5 tandem repeats follow at residues 44–52 (PQGGGGWGQ), 53–60 (PHGGGWGQ), 61–68 (PHGGGWGQ), 69–76 (PHGGGWGQ), and 77–84 (PHGGGWGQ). The interval 44 to 84 (PQGGGGWGQPHGGGWGQPHGGGWGQPHGGGWGQPHGGGWGQ) is 5 X 8 AA tandem repeats of P-H-G-G-G-W-G-Q. The span at 45–88 (QGGGGWGQPHGGGWGQPHGGGWGQPHGGGWGQPHGGGWGQGGGT) shows a compositional bias: gly residues. 12 residues coordinate Cu(2+): histidine 54, glycine 55, glycine 56, histidine 62, glycine 63, glycine 64, histidine 70, glycine 71, glycine 72, histidine 78, glycine 79, and glycine 80. Basic residues predominate over residues 91-102 (QWHKPSKPKTSM). Cysteine 172 and cysteine 207 form a disulfide bridge. Asparagine 174 and asparagine 190 each carry an N-linked (GlcNAc...) asparagine glycan. The GPI-anchor amidated serine moiety is linked to residue serine 223. Residues 224-246 (SMVLFSSPPVILLISFLIFLIVG) constitute a propeptide, removed in mature form.

The protein belongs to the prion family. As to quaternary structure, monomer and homodimer. Has a tendency to aggregate into amyloid fibrils containing a cross-beta spine, formed by a steric zipper of superposed beta-strands. Soluble oligomers may represent an intermediate stage on the path to fibril formation. Copper binding may promote oligomerization. Interacts with GRB2, APP, ERI3/PRNPIP and SYN1. Mislocalized cytosolically exposed PrP interacts with MGRN1; this interaction alters MGRN1 subcellular location and causes lysosomal enlargement. Interacts with KIAA1191.

It is found in the cell membrane. The protein localises to the golgi apparatus. Its function is as follows. Its primary physiological function is unclear. Has cytoprotective activity against internal or environmental stresses. May play a role in neuronal development and synaptic plasticity. May be required for neuronal myelin sheath maintenance. May play a role in iron uptake and iron homeostasis. Soluble oligomers are toxic to cultured neuroblastoma cells and induce apoptosis (in vitro). Association with GPC1 (via its heparan sulfate chains) targets PRNP to lipid rafts. Also provides Cu(2+) or Zn(2+) for the ascorbate-mediated GPC1 deaminase degradation of its heparan sulfate side chains. The chain is Major prion protein (PRNP) from Cercocebus atys (Sooty mangabey).